The primary structure comprises 230 residues: Modulator of macroautophagy TMEM150B-A (230 aa).

Residue methionine 1 is a topological domain, cytoplasmic. A helical membrane pass occupies residues 2-22 (WAWALLPICLTIWATAGIWIV). The Extracellular segment spans residues 23–50 (YGMSVSNGSVNLSDGFPYISLCGTDPPQ). Asparagine 29 and asparagine 33 each carry an N-linked (GlcNAc...) asparagine glycan. The chain crosses the membrane as a helical span at residues 51-71 (SCVFGQVLNVGAMLGVWISAI). The Cytoplasmic portion of the chain corresponds to 72–83 (RFQQIRDYNCHS). The chain crosses the membrane as a helical span at residues 84-104 (VLNSVSLAMGILCALGTSIVG). The Extracellular portion of the chain corresponds to 105–115 (NFQQSNQLETH). A helical membrane pass occupies residues 116–136 (LAGAFLAFVIGNIYFWMQTAL). Residues 137-150 (TYMVKPTHGGCYIG) lie on the Cytoplasmic side of the membrane. A helical transmembrane segment spans residues 151–171 (PIRFCLSVACTALIVLMAVFL). The Extracellular portion of the chain corresponds to 172–183 (KMNMKSISAICE). The helical transmembrane segment at 184–204 (WIVAMILFLLYGLFAVDFWHL) threads the bilayer. The Cytoplasmic segment spans residues 205 to 230 (DGHYFHVKKRTVIPNEMQVSTVTLSI).

It belongs to the DRAM/TMEM150 family.

The protein localises to the cell membrane. Its subcellular location is the endosome membrane. It is found in the cytoplasmic vesicle. It localises to the autophagosome membrane. Its function is as follows. Modulator of macroautophagy that causes accumulation of autophagosomes under basal conditions and enhances autophagic flux. Represses cell death and promotes long-term clonogenic survival of cells grown in the absence of glucose in a macroautophagy-independent manner. May have some role in extracellular matrix engulfment or growth factor receptor recycling, both of which can modulate cell survival. This is Modulator of macroautophagy TMEM150B-A from Xenopus laevis (African clawed frog).